The primary structure comprises 212 residues: Actin-depolymerizing factor 1, isoforms a/b (212 aa).

The ADF-H domain maps to 3 to 159; sequence SGVMVDPDVQ…SHKELLNNCP (157 aa).

The protein belongs to the actin-binding proteins ADF family. As to quaternary structure, interacts with F-actin.

In terms of biological role, depolymerizes growing actin filaments in muscle cells; required for the assembly of actin filaments into the functional contractile myofilament lattice of muscle. Competes with unc-87 for actin binding and inhibits the actin-bundling activity of unc-87. The sequence is that of Actin-depolymerizing factor 1, isoforms a/b from Caenorhabditis elegans.